A 425-amino-acid polypeptide reads, in one-letter code: Glucan endo-1,3-beta-glucosidase 10 (425 aa).

An N-terminal signal peptide occupies residues 1–26 (MASSSLQSLFSLFCLALFSLPLIVSS). Residue Glu119 is the Proton donor of the active site. Asn124 carries an N-linked (GlcNAc...) asparagine glycan. Glu266 (nucleophile) is an active-site residue. Residues 347–387 (GIKTSSTHSSGSGSSNSTGGSSSGGGGNTGGSSSGGGIYQP) form a disordered region. Residues 350–366 (TSSTHSSGSGSSNSTGG) are compositionally biased toward low complexity. A glycan (N-linked (GlcNAc...) asparagine) is linked at Asn362. The segment covering 367–384 (SSSGGGGNTGGSSSGGGI) has biased composition (gly residues). The GPI-anchor amidated serine moiety is linked to residue Ser401. Positions 402–425 (AGGKGRFVECVLFFFLLCIIKLRL) are cleaved as a propeptide — removed in mature form.

The protein belongs to the glycosyl hydrolase 17 family. Highly expressed in flowers and siliques.

The protein localises to the cell membrane. Its subcellular location is the cell junction. It localises to the plasmodesma. It catalyses the reaction Hydrolysis of (1-&gt;3)-beta-D-glucosidic linkages in (1-&gt;3)-beta-D-glucans.. Functionally, plasmodesmal-associated membrane beta-1,3-glucanase involved in plasmodesmal callose degradation and functions in the gating of plasmodesmata. In Arabidopsis thaliana (Mouse-ear cress), this protein is Glucan endo-1,3-beta-glucosidase 10.